We begin with the raw amino-acid sequence, 446 residues long: tRNA-2-methylthio-N(6)-dimethylallyladenosine synthase (446 aa).

Residues 2–122 (KKAYVKSYGC…LPDLLRQSRE (121 aa)) form the MTTase N-terminal domain. Positions 11, 47, 85, 157, 161, and 164 each coordinate [4Fe-4S] cluster. The region spanning 143-375 (RNRGVTGFLT…QDLLDRQRHA (233 aa)) is the Radical SAM core domain. One can recognise a TRAM domain in the interval 378–440 (AASVGTLTEI…SNSLFGETLE (63 aa)).

This sequence belongs to the methylthiotransferase family. MiaB subfamily. In terms of assembly, monomer. Requires [4Fe-4S] cluster as cofactor.

The protein resides in the cytoplasm. The enzyme catalyses N(6)-dimethylallyladenosine(37) in tRNA + (sulfur carrier)-SH + AH2 + 2 S-adenosyl-L-methionine = 2-methylsulfanyl-N(6)-dimethylallyladenosine(37) in tRNA + (sulfur carrier)-H + 5'-deoxyadenosine + L-methionine + A + S-adenosyl-L-homocysteine + 2 H(+). Functionally, catalyzes the methylthiolation of N6-(dimethylallyl)adenosine (i(6)A), leading to the formation of 2-methylthio-N6-(dimethylallyl)adenosine (ms(2)i(6)A) at position 37 in tRNAs that read codons beginning with uridine. The protein is tRNA-2-methylthio-N(6)-dimethylallyladenosine synthase of Methylorubrum extorquens (strain PA1) (Methylobacterium extorquens).